The primary structure comprises 512 residues: Maturase K (512 aa).

It belongs to the intron maturase 2 family. MatK subfamily.

Its subcellular location is the plastid. The protein resides in the chloroplast. Functionally, usually encoded in the trnK tRNA gene intron. Probably assists in splicing its own and other chloroplast group II introns. This chain is Maturase K, found in Amorphophallus titanum (Titan arum).